The following is a 131-amino-acid chain: Steroid Delta-isomerase (131 aa).

Catalysis depends on tyrosine 16, which acts as the Proton donor. Catalysis depends on aspartate 40, which acts as the Proton acceptor. Aspartate 103 provides a ligand contact to substrate.

Homodimer.

The catalysed reaction is a 3-oxo-Delta(5)-steroid = a 3-oxo-Delta(4)-steroid. The polypeptide is Steroid Delta-isomerase (ksi) (Pseudomonas putida (Arthrobacter siderocapsulatus)).